A 417-amino-acid chain; its full sequence is UDP-N-acetylmuramoylalanine--D-glutamate ligase (417 aa).

108–114 contacts ATP; it reads GSNGKTT.

The protein belongs to the MurCDEF family.

The protein localises to the cytoplasm. The catalysed reaction is UDP-N-acetyl-alpha-D-muramoyl-L-alanine + D-glutamate + ATP = UDP-N-acetyl-alpha-D-muramoyl-L-alanyl-D-glutamate + ADP + phosphate + H(+). The protein operates within cell wall biogenesis; peptidoglycan biosynthesis. Its function is as follows. Cell wall formation. Catalyzes the addition of glutamate to the nucleotide precursor UDP-N-acetylmuramoyl-L-alanine (UMA). This Chlamydia pneumoniae (Chlamydophila pneumoniae) protein is UDP-N-acetylmuramoylalanine--D-glutamate ligase.